The following is a 251-amino-acid chain: Cell division protein ZapD (251 aa).

It belongs to the ZapD family. Interacts with FtsZ.

The protein resides in the cytoplasm. Cell division factor that enhances FtsZ-ring assembly. Directly interacts with FtsZ and promotes bundling of FtsZ protofilaments, with a reduction in FtsZ GTPase activity. The protein is Cell division protein ZapD of Paraburkholderia phymatum (strain DSM 17167 / CIP 108236 / LMG 21445 / STM815) (Burkholderia phymatum).